A 401-amino-acid chain; its full sequence is Carbamoyl phosphate synthase small chain (401 aa).

A CPSase region spans residues 1–203 (MTATPAWTIQ…EGYSTLGETD (203 aa)). Residues Ser-56, Gly-255, and Gly-257 each contribute to the L-glutamine site. A Glutamine amidotransferase type-1 domain is found at 207 to 395 (HVVALDYGVK…LNLIREKKGE (189 aa)). Residue Cys-284 is the Nucleophile of the active site. 5 residues coordinate L-glutamine: Leu-285, Gln-288, Asn-326, Gly-328, and Phe-329. Active-site residues include His-368 and Glu-370.

This sequence belongs to the CarA family. As to quaternary structure, composed of two chains; the small (or glutamine) chain promotes the hydrolysis of glutamine to ammonia, which is used by the large (or ammonia) chain to synthesize carbamoyl phosphate. Tetramer of heterodimers (alpha,beta)4.

The catalysed reaction is hydrogencarbonate + L-glutamine + 2 ATP + H2O = carbamoyl phosphate + L-glutamate + 2 ADP + phosphate + 2 H(+). It carries out the reaction L-glutamine + H2O = L-glutamate + NH4(+). It participates in amino-acid biosynthesis; L-arginine biosynthesis; carbamoyl phosphate from bicarbonate: step 1/1. The protein operates within pyrimidine metabolism; UMP biosynthesis via de novo pathway; (S)-dihydroorotate from bicarbonate: step 1/3. Small subunit of the glutamine-dependent carbamoyl phosphate synthetase (CPSase). CPSase catalyzes the formation of carbamoyl phosphate from the ammonia moiety of glutamine, carbonate, and phosphate donated by ATP, constituting the first step of 2 biosynthetic pathways, one leading to arginine and/or urea and the other to pyrimidine nucleotides. The small subunit (glutamine amidotransferase) binds and cleaves glutamine to supply the large subunit with the substrate ammonia. The polypeptide is Carbamoyl phosphate synthase small chain (Rhizobium meliloti (strain 1021) (Ensifer meliloti)).